Consider the following 159-residue polypeptide: Ribosomal RNA large subunit methyltransferase H (159 aa).

Gly108 is a binding site for S-adenosyl-L-methionine.

The protein belongs to the RNA methyltransferase RlmH family. Homodimer.

It is found in the cytoplasm. It carries out the reaction pseudouridine(1915) in 23S rRNA + S-adenosyl-L-methionine = N(3)-methylpseudouridine(1915) in 23S rRNA + S-adenosyl-L-homocysteine + H(+). In terms of biological role, specifically methylates the pseudouridine at position 1915 (m3Psi1915) in 23S rRNA. This Lactobacillus johnsonii (strain CNCM I-12250 / La1 / NCC 533) protein is Ribosomal RNA large subunit methyltransferase H.